The sequence spans 236 residues: Ubiquinone biosynthesis O-methyltransferase (236 aa).

S-adenosyl-L-methionine-binding residues include Arg39, Gly59, Asp80, and Met124.

Belongs to the methyltransferase superfamily. UbiG/COQ3 family.

It carries out the reaction a 3-demethylubiquinol + S-adenosyl-L-methionine = a ubiquinol + S-adenosyl-L-homocysteine + H(+). The catalysed reaction is a 3-(all-trans-polyprenyl)benzene-1,2-diol + S-adenosyl-L-methionine = a 2-methoxy-6-(all-trans-polyprenyl)phenol + S-adenosyl-L-homocysteine + H(+). It functions in the pathway cofactor biosynthesis; ubiquinone biosynthesis. O-methyltransferase that catalyzes the 2 O-methylation steps in the ubiquinone biosynthetic pathway. This Shewanella sp. (strain MR-7) protein is Ubiquinone biosynthesis O-methyltransferase.